Reading from the N-terminus, the 356-residue chain is Sorbitol dehydrogenase (356 aa).

Cysteine 44 provides a ligand contact to Zn(2+). A substrate-binding site is contributed by tyrosine 50. 2 residues coordinate Zn(2+): histidine 69 and glutamate 70. Glutamate 155 provides a ligand contact to substrate. Positions 183, 203, and 208 each coordinate NAD(+). 2 positions are modified to phosphoserine: serine 210 and serine 224. NAD(+) contacts are provided by residues 272-274 and 296-298; these read VGL and VFR. Substrate-binding residues include arginine 298 and tyrosine 299.

This sequence belongs to the zinc-containing alcohol dehydrogenase family. As to quaternary structure, homotetramer. Zn(2+) is required as a cofactor. As to expression, expressed in lens.

The protein resides in the mitochondrion membrane. It is found in the cell projection. It localises to the cilium. The protein localises to the flagellum. The catalysed reaction is xylitol + NAD(+) = D-xylulose + NADH + H(+). It catalyses the reaction keto-D-fructose + NADH + H(+) = D-sorbitol + NAD(+). It carries out the reaction L-iditol + NAD(+) = keto-L-sorbose + NADH + H(+). Its activity is regulated as follows. Inhibited in vitro by metal chelators such as EDTA and 1,10-phenanthroline. Its function is as follows. Polyol dehydrogenase that catalyzes the reversible NAD(+)-dependent oxidation of various sugar alcohols. Is mostly active with xylitol, D-sorbitol (D-glucitol) and L-iditol as substrates, leading to the C2-oxidized products D-xylulose, D-fructose and L-sorbose, respectively. Is a key enzyme in the polyol pathway that interconverts glucose and fructose via sorbitol, which constitutes an important alternate route for glucose metabolism. May play a role in sperm motility by using sorbitol as an alternative energy source for sperm motility. Cannot use NADP(+) as the electron acceptor. Has no activity on ethanol, methanol, glycerol, galactitol and fructose 6-phosphate. The protein is Sorbitol dehydrogenase (SORD) of Bos taurus (Bovine).